The primary structure comprises 322 residues: Deoxycytidylate deaminase (322 aa).

The CMP/dCMP-type deaminase domain occupies 173 to 311 (SWDSYFMEMA…SLLQAAGVQL (139 aa)). Residue His-246 coordinates Zn(2+). Residue Glu-248 is the Proton donor of the active site. 2 residues coordinate Zn(2+): Cys-273 and Cys-276.

It belongs to the cytidine and deoxycytidylate deaminase family. Zn(2+) is required as a cofactor.

The protein localises to the cytoplasm. The protein resides in the nucleus. It carries out the reaction dCMP + H2O + H(+) = dUMP + NH4(+). Supplies the nucleotide substrate for thymidylate synthetase. The protein is Deoxycytidylate deaminase of Schizosaccharomyces pombe (strain 972 / ATCC 24843) (Fission yeast).